Here is a 208-residue protein sequence, read N- to C-terminus: Large ribosomal subunit protein uL4 (208 aa).

The segment at 46–84 is disordered; sequence QGTHKAKTRAEVRGGGRKPFRQKGTGNARQGSTRSPLMI. A compositionally biased stretch (polar residues) spans 69 to 80; the sequence is GTGNARQGSTRS.

It belongs to the universal ribosomal protein uL4 family. Part of the 50S ribosomal subunit.

Functionally, one of the primary rRNA binding proteins, this protein initially binds near the 5'-end of the 23S rRNA. It is important during the early stages of 50S assembly. It makes multiple contacts with different domains of the 23S rRNA in the assembled 50S subunit and ribosome. Forms part of the polypeptide exit tunnel. This Chlorobium limicola (strain DSM 245 / NBRC 103803 / 6330) protein is Large ribosomal subunit protein uL4.